We begin with the raw amino-acid sequence, 1196 residues long: DNA-directed RNA polymerase subunit 2 (1196 aa).

The disordered stretch occupies residues 1074–1095 (SRARGPTQLLTRQAPEGRSRDG). The segment at 1133-1154 (CDSCGQFAHKVPEKKYYTCTGC) adopts a C4-type zinc-finger fold.

It belongs to the RNA polymerase beta chain family.

The protein resides in the virion. The catalysed reaction is RNA(n) + a ribonucleoside 5'-triphosphate = RNA(n+1) + diphosphate. In terms of biological role, DNA-dependent RNA polymerase catalyzes the transcription of DNA into RNA using the four ribonucleoside triphosphates as substrates. This chain is DNA-directed RNA polymerase subunit 2 (RPO2), found in Acanthamoeba polyphaga mimivirus (APMV).